The sequence spans 395 residues: tRNA-specific 2-thiouridylase MnmA (395 aa).

ATP contacts are provided by residues 6 to 13 (AMSGGVDS) and L32. Residue C101 is the Nucleophile of the active site. An intrachain disulfide couples C101 to C193. G125 serves as a coordination point for ATP. An interaction with tRNA region spans residues 143 to 145 (KDQ). C193 acts as the Cysteine persulfide intermediate in catalysis.

This sequence belongs to the MnmA/TRMU family.

The protein localises to the cytoplasm. The catalysed reaction is S-sulfanyl-L-cysteinyl-[protein] + uridine(34) in tRNA + AH2 + ATP = 2-thiouridine(34) in tRNA + L-cysteinyl-[protein] + A + AMP + diphosphate + H(+). Functionally, catalyzes the 2-thiolation of uridine at the wobble position (U34) of tRNA, leading to the formation of s(2)U34. The sequence is that of tRNA-specific 2-thiouridylase MnmA from Corynebacterium jeikeium (strain K411).